A 146-amino-acid polypeptide reads, in one-letter code: Core protein D2 (146 aa).

This sequence belongs to the orthopoxvirus OPG114 family. Part of a complex composed of the kinase OPG054, OPG092, OPG100, OPG114, OPG115, OPG142 and OPG157.

The protein localises to the virion. Late protein which is part of a large complex required for early virion morphogenesis. This complex participates in the formation of virosomes and the incorporation of virosomal contents into nascent immature virions. This chain is Core protein D2 (OPG114), found in Vaccinia virus (strain Copenhagen) (VACV).